The chain runs to 250 residues: tRNA (guanine-N(1)-)-methyltransferase (250 aa).

Residues Gly115 and 135 to 140 (LGDFVL) contribute to the S-adenosyl-L-methionine site.

This sequence belongs to the RNA methyltransferase TrmD family. As to quaternary structure, homodimer.

The protein resides in the cytoplasm. The enzyme catalyses guanosine(37) in tRNA + S-adenosyl-L-methionine = N(1)-methylguanosine(37) in tRNA + S-adenosyl-L-homocysteine + H(+). Functionally, specifically methylates guanosine-37 in various tRNAs. This Legionella pneumophila (strain Lens) protein is tRNA (guanine-N(1)-)-methyltransferase.